The following is a 355-amino-acid chain: Polyferredoxin protein FwdF (355 aa).

4Fe-4S ferredoxin-type domains follow at residues 24–53 (RELCWNDELCVGCGICADICPVNAIAMGPL), 64–93 (PKLDIDKDVCVLCGMCASACPFDALDLKIN), 108–137 (RDIKVYQDKCVLCEQCEMVCPQGAIVVERE), 147–176 (GEININKEKCVLCGICAEYCPADAINLKYN), 187–216 (TDIEVDKDKCVFCKVCEFVCPHDAIEVICY), 235–264 (GKTVIDKDACVTCGWCAFICPAEAIEVEKP), 267–296 (GELIIDVNACNACGACISICPCSALEFPKP), and 304–333 (PRIIVNQNLCVLCGACAKACPVNAIKVKRT). Cys33, Cys36, Cys39, Cys43, Cys73, Cys76, Cys79, Cys83, Cys117, Cys120, Cys123, Cys127, Cys156, Cys159, Cys162, Cys166, Cys196, Cys199, Cys202, Cys206, Cys244, Cys247, Cys250, Cys254, Cys276, Cys279, Cys282, Cys286, Cys313, Cys316, Cys319, and Cys323 together coordinate [4Fe-4S] cluster.

[4Fe-4S] cluster is required as a cofactor.

The chain is Polyferredoxin protein FwdF (fwdF) from Methanocaldococcus jannaschii (strain ATCC 43067 / DSM 2661 / JAL-1 / JCM 10045 / NBRC 100440) (Methanococcus jannaschii).